The following is a 341-amino-acid chain: Phenylalanine--tRNA ligase alpha subunit (341 aa).

E256 is a Mg(2+) binding site.

The protein belongs to the class-II aminoacyl-tRNA synthetase family. Phe-tRNA synthetase alpha subunit type 1 subfamily. As to quaternary structure, tetramer of two alpha and two beta subunits. Mg(2+) is required as a cofactor.

It localises to the cytoplasm. The catalysed reaction is tRNA(Phe) + L-phenylalanine + ATP = L-phenylalanyl-tRNA(Phe) + AMP + diphosphate + H(+). The chain is Phenylalanine--tRNA ligase alpha subunit from Leptospira biflexa serovar Patoc (strain Patoc 1 / Ames).